The sequence spans 182 residues: Bifunctional protein PyrR (182 aa).

The PRPP-binding motif lies at 99–111 (IVLVDDVIFTGRT).

It belongs to the purine/pyrimidine phosphoribosyltransferase family. PyrR subfamily. Homodimer and homohexamer; in equilibrium.

The enzyme catalyses UMP + diphosphate = 5-phospho-alpha-D-ribose 1-diphosphate + uracil. Functionally, regulates transcriptional attenuation of the pyrimidine nucleotide (pyr) operon by binding in a uridine-dependent manner to specific sites on pyr mRNA. This disrupts an antiterminator hairpin in the RNA and favors formation of a downstream transcription terminator, leading to a reduced expression of downstream genes. Also displays a weak uracil phosphoribosyltransferase activity which is not physiologically significant. The polypeptide is Bifunctional protein PyrR (Caldicellulosiruptor saccharolyticus (strain ATCC 43494 / DSM 8903 / Tp8T 6331)).